Consider the following 119-residue polypeptide: Hydrogenase maturation factor HypA (119 aa).

His2 contacts Ni(2+). Zn(2+)-binding residues include Cys73, Cys76, Cys89, and Cys92.

The protein belongs to the HypA/HybF family.

Its function is as follows. Involved in the maturation of [NiFe] hydrogenases. Required for nickel insertion into the metal center of the hydrogenase. This Cupriavidus necator (strain ATCC 17699 / DSM 428 / KCTC 22496 / NCIMB 10442 / H16 / Stanier 337) (Ralstonia eutropha) protein is Hydrogenase maturation factor HypA.